Reading from the N-terminus, the 306-residue chain is Probable cobalamin biosynthesis protein CobD (306 aa).

The next 5 helical transmembrane spans lie at 54–74 (LFGFLNVVLVLAIVFFMAFEI), 88–108 (ISLYSIILSFSIGHKSLIEFS), 155–175 (ITDSIIAPLIYAAIFGLPGAF), 207–227 (ILNFIPSRIAGMLLIISAPFY), and 286–306 (SLKAVDYSVLLFLIIYMILFM).

Belongs to the CobD/CbiB family.

Its subcellular location is the cell membrane. The protein operates within cofactor biosynthesis; adenosylcobalamin biosynthesis. Functionally, converts cobyric acid to cobinamide by the addition of aminopropanol on the F carboxylic group. The sequence is that of Probable cobalamin biosynthesis protein CobD from Methanococcus maripaludis (strain DSM 14266 / JCM 13030 / NBRC 101832 / S2 / LL).